A 336-amino-acid polypeptide reads, in one-letter code: MSIMDERLLSGESAYEDADLEYSLRPQTLRQYIGQDKAKHNLEVFIEAAKMREETLDHVLLYGPPGLGKTTLANIIANEMGVNVRTTSGPAIERPGDLAAVLTSLQPGDVLFIDEIHRLHRSIEEVLYPAMEDFCLDIVIGKGPSARSVRLDLPPFTLVGATTRAGALSAPLRDRFGVLSRLEYYTVDQLSAIVERTAEVFEVEIDSLAALEIARRARGTPRIANRLLRRVRDFAQVRGNGTVTMEITQMALELLQVDKLGLDHIDHKLLLGIIEKFRGGPVGLETVSATIGEESHTIEDVYEPYLLQIGFLQRTPRGRIVTPLAYEHFGMEMPKV.

A large ATPase domain (RuvB-L) region spans residues 4–185; the sequence is MDERLLSGES…FGVLSRLEYY (182 aa). ATP contacts are provided by residues L24, R25, G66, K69, T70, T71, 132–134, R175, Y185, and R222; that span reads EDF. Residue T70 participates in Mg(2+) binding. The interval 186 to 256 is small ATPAse domain (RuvB-S); it reads TVDQLSAIVE…ITQMALELLQ (71 aa). The interval 259–336 is head domain (RuvB-H); the sequence is KLGLDHIDHK…EHFGMEMPKV (78 aa). R314 and R319 together coordinate DNA.

It belongs to the RuvB family. In terms of assembly, homohexamer. Forms an RuvA(8)-RuvB(12)-Holliday junction (HJ) complex. HJ DNA is sandwiched between 2 RuvA tetramers; dsDNA enters through RuvA and exits via RuvB. An RuvB hexamer assembles on each DNA strand where it exits the tetramer. Each RuvB hexamer is contacted by two RuvA subunits (via domain III) on 2 adjacent RuvB subunits; this complex drives branch migration. In the full resolvosome a probable DNA-RuvA(4)-RuvB(12)-RuvC(2) complex forms which resolves the HJ.

Its subcellular location is the cytoplasm. It catalyses the reaction ATP + H2O = ADP + phosphate + H(+). The RuvA-RuvB-RuvC complex processes Holliday junction (HJ) DNA during genetic recombination and DNA repair, while the RuvA-RuvB complex plays an important role in the rescue of blocked DNA replication forks via replication fork reversal (RFR). RuvA specifically binds to HJ cruciform DNA, conferring on it an open structure. The RuvB hexamer acts as an ATP-dependent pump, pulling dsDNA into and through the RuvAB complex. RuvB forms 2 homohexamers on either side of HJ DNA bound by 1 or 2 RuvA tetramers; 4 subunits per hexamer contact DNA at a time. Coordinated motions by a converter formed by DNA-disengaged RuvB subunits stimulates ATP hydrolysis and nucleotide exchange. Immobilization of the converter enables RuvB to convert the ATP-contained energy into a lever motion, pulling 2 nucleotides of DNA out of the RuvA tetramer per ATP hydrolyzed, thus driving DNA branch migration. The RuvB motors rotate together with the DNA substrate, which together with the progressing nucleotide cycle form the mechanistic basis for DNA recombination by continuous HJ branch migration. Branch migration allows RuvC to scan DNA until it finds its consensus sequence, where it cleaves and resolves cruciform DNA. This Bacillus cereus (strain ZK / E33L) protein is Holliday junction branch migration complex subunit RuvB.